The following is a 305-amino-acid chain: Homoserine kinase (305 aa).

93–103 (PLSRGLGSSAT) serves as a coordination point for ATP.

Belongs to the GHMP kinase family. Homoserine kinase subfamily.

The protein resides in the cytoplasm. The enzyme catalyses L-homoserine + ATP = O-phospho-L-homoserine + ADP + H(+). Its pathway is amino-acid biosynthesis; L-threonine biosynthesis; L-threonine from L-aspartate: step 4/5. Functionally, catalyzes the ATP-dependent phosphorylation of L-homoserine to L-homoserine phosphate. This chain is Homoserine kinase, found in Picosynechococcus sp. (strain ATCC 27264 / PCC 7002 / PR-6) (Agmenellum quadruplicatum).